The chain runs to 136 residues: Protein PsiE (136 aa).

4 helical membrane-spanning segments follow: residues Ile15–Leu35, Tyr55–Val75, His83–Val103, and Pro108–Cys128.

Belongs to the PsiE family.

The protein resides in the cell inner membrane. This Salmonella agona (strain SL483) protein is Protein PsiE.